The sequence spans 235 residues: Protein GrpE (235 aa).

2 stretches are compositionally biased toward basic and acidic residues: residues 1–16 (MENK…HEKN) and 24–35 (NNVKKENLHEDQ). A disordered region spans residues 1–51 (MENKNQKHNNEFHEKNQQSQKDNNNVKKENLHEDQSDLNDANFDDGGKKNK).

This sequence belongs to the GrpE family. Homodimer.

It is found in the cytoplasm. In terms of biological role, participates actively in the response to hyperosmotic and heat shock by preventing the aggregation of stress-denatured proteins, in association with DnaK and GrpE. It is the nucleotide exchange factor for DnaK and may function as a thermosensor. Unfolded proteins bind initially to DnaJ; upon interaction with the DnaJ-bound protein, DnaK hydrolyzes its bound ATP, resulting in the formation of a stable complex. GrpE releases ADP from DnaK; ATP binding to DnaK triggers the release of the substrate protein, thus completing the reaction cycle. Several rounds of ATP-dependent interactions between DnaJ, DnaK and GrpE are required for fully efficient folding. In Malacoplasma penetrans (strain HF-2) (Mycoplasma penetrans), this protein is Protein GrpE.